The following is a 467-amino-acid chain: Glutamate--tRNA ligase (467 aa).

Residues Pro10–Gly20 carry the 'HIGH' region motif. Zn(2+) is bound by residues Cys99, Cys101, Cys126, and Glu128. The short motif at Arg236–Arg240 is the 'KMSKS' region element. Lys239 lines the ATP pocket.

The protein belongs to the class-I aminoacyl-tRNA synthetase family. Glutamate--tRNA ligase type 1 subfamily. Monomer. Zn(2+) serves as cofactor.

It localises to the cytoplasm. The catalysed reaction is tRNA(Glu) + L-glutamate + ATP = L-glutamyl-tRNA(Glu) + AMP + diphosphate. In terms of biological role, catalyzes the attachment of glutamate to tRNA(Glu) in a two-step reaction: glutamate is first activated by ATP to form Glu-AMP and then transferred to the acceptor end of tRNA(Glu). The polypeptide is Glutamate--tRNA ligase (Desulfosudis oleivorans (strain DSM 6200 / JCM 39069 / Hxd3) (Desulfococcus oleovorans)).